The primary structure comprises 248 residues: MAEEEAGGLVFHPMDQFVIKPLFGEGPVNWYTPTNATLWMALAALAITALLVFGTRGRAIVPNRVQSIAELLYGMVHKMVEDVTGKDGLKYFPYVMTLFCFILFANFLGLLPKSFSPTSHIAVTAVLAVLVFAGVTVLGFVKNGAHFLGLFWVSSAPLALRPVLAVIELISYFVRPVSHSIRLAGNIMAGHAVIKVFAAFAAVAAIAPVSVVAITAMYGLEVLVCLIQAYVFTILTCVYLKDALHPAH.

6 helical membrane-spanning segments follow: residues 34–54 (TNAT…LVFG), 91–111 (YFPY…LGLL), 121–141 (IAVT…LGFV), 147–167 (FLGL…LAVI), 196–216 (VFAA…AITA), and 220–240 (LEVL…CVYL).

It belongs to the ATPase A chain family. F-type ATPases have 2 components, CF(1) - the catalytic core - and CF(0) - the membrane proton channel. CF(1) has five subunits: alpha(3), beta(3), gamma(1), delta(1), epsilon(1). CF(0) has three main subunits: a(1), b(2) and c(9-12). The alpha and beta chains form an alternating ring which encloses part of the gamma chain. CF(1) is attached to CF(0) by a central stalk formed by the gamma and epsilon chains, while a peripheral stalk is formed by the delta and b chains.

The protein resides in the cell inner membrane. Its function is as follows. Key component of the proton channel; it plays a direct role in the translocation of protons across the membrane. The protein is ATP synthase subunit a of Paracoccus denitrificans (strain Pd 1222).